The following is a 363-amino-acid chain: Double-strand-specific pac1 ribonuclease (363 aa).

Disordered regions lie at residues 1 to 35 and 92 to 138; these read MGRF…KRSS and SRHD…PPLR. The span at 13–22 shows a compositional bias: low complexity; it reads DSSSSASDSL. Residues 24–35 are compositionally biased toward basic residues; that stretch reads RGRRSLGHKRSS. Phosphoserine is present on Ser-122. One can recognise an RNase III domain in the interval 139–262; sequence SEKLKEQVFM…YLGALILDGQ (124 aa). In terms of domain architecture, DRBM spans 285-356; the sequence is RPIDKLAKSK…AMQALEVLAK (72 aa).

Requires Mg(2+) as cofactor.

The catalysed reaction is Endonucleolytic cleavage to 5'-phosphomonoester.. In terms of biological role, digests double-stranded RNA. Converts long double-stranded RNAs into short oligonucleotides, leaving 5'-phosphates on their cleavage products. Probably inhibits mating and meiosis by degrading a specific mRNA required for sexual development. The chain is Double-strand-specific pac1 ribonuclease (pac1) from Schizosaccharomyces pombe (strain 972 / ATCC 24843) (Fission yeast).